Here is a 659-residue protein sequence, read N- to C-terminus: Threonine--tRNA ligase (659 aa).

In terms of domain architecture, TGS spans 1–61; that stretch reads MSAVPELRIT…ADGDVVEEIR (61 aa). Positions 260–555 are catalytic; sequence DHRKLGVELD…LLEHYAGAFP (296 aa). Cys353, His404, and His532 together coordinate Zn(2+).

The protein belongs to the class-II aminoacyl-tRNA synthetase family. As to quaternary structure, homodimer. Zn(2+) is required as a cofactor.

It is found in the cytoplasm. It carries out the reaction tRNA(Thr) + L-threonine + ATP = L-threonyl-tRNA(Thr) + AMP + diphosphate + H(+). Its function is as follows. Catalyzes the attachment of threonine to tRNA(Thr) in a two-step reaction: L-threonine is first activated by ATP to form Thr-AMP and then transferred to the acceptor end of tRNA(Thr). Also edits incorrectly charged L-seryl-tRNA(Thr). This is Threonine--tRNA ligase from Thermobifida fusca (strain YX).